Consider the following 611-residue polypeptide: 4-hydroxy-3-methylbut-2-en-1-yl diphosphate synthase (flavodoxin) (611 aa).

Residues Cys-520, Cys-523, Cys-554, and Glu-561 each contribute to the [4Fe-4S] cluster site.

It belongs to the IspG family. [4Fe-4S] cluster serves as cofactor.

The enzyme catalyses (2E)-4-hydroxy-3-methylbut-2-enyl diphosphate + oxidized [flavodoxin] + H2O + 2 H(+) = 2-C-methyl-D-erythritol 2,4-cyclic diphosphate + reduced [flavodoxin]. It participates in isoprenoid biosynthesis; isopentenyl diphosphate biosynthesis via DXP pathway; isopentenyl diphosphate from 1-deoxy-D-xylulose 5-phosphate: step 5/6. Its function is as follows. Converts 2C-methyl-D-erythritol 2,4-cyclodiphosphate (ME-2,4cPP) into 1-hydroxy-2-methyl-2-(E)-butenyl 4-diphosphate. This Parabacteroides distasonis (strain ATCC 8503 / DSM 20701 / CIP 104284 / JCM 5825 / NCTC 11152) protein is 4-hydroxy-3-methylbut-2-en-1-yl diphosphate synthase (flavodoxin).